The sequence spans 874 residues: Alanine--tRNA ligase (874 aa).

Residues His-562, His-566, Cys-664, and His-668 each contribute to the Zn(2+) site.

It belongs to the class-II aminoacyl-tRNA synthetase family. Requires Zn(2+) as cofactor.

The protein localises to the cytoplasm. The enzyme catalyses tRNA(Ala) + L-alanine + ATP = L-alanyl-tRNA(Ala) + AMP + diphosphate. Its function is as follows. Catalyzes the attachment of alanine to tRNA(Ala) in a two-step reaction: alanine is first activated by ATP to form Ala-AMP and then transferred to the acceptor end of tRNA(Ala). Also edits incorrectly charged Ser-tRNA(Ala) and Gly-tRNA(Ala) via its editing domain. In Shewanella putrefaciens (strain CN-32 / ATCC BAA-453), this protein is Alanine--tRNA ligase.